We begin with the raw amino-acid sequence, 904 residues long: Translation initiation factor IF-2 (904 aa).

Disordered stretches follow at residues 134-248 (RQRN…GSHV) and 267-315 (HLSA…FERP). Basic and acidic residues predominate over residues 136-177 (RNLDEQQRLAESDRVRDEEIQRKRDEEQAAKDRAEAERKAAE). Low complexity-rich tracts occupy residues 178 to 230 (EAAA…STPA) and 285 to 303 (GRPG…RGSN). Residues 403–572 (TRPPVVTIMG…SLQAEVLELK (170 aa)) form the tr-type G domain. The G1 stretch occupies residues 412 to 419 (GHVDHGKT). 412 to 419 (GHVDHGKT) contacts GTP. Residues 437-441 (GITQH) are G2. Residues 458–461 (DTPG) form a G3 region. Residues 458-462 (DTPGH) and 512-515 (NKID) contribute to the GTP site. Residues 512–515 (NKID) form a G4 region. A G5 region spans residues 548–550 (SAK).

Belongs to the TRAFAC class translation factor GTPase superfamily. Classic translation factor GTPase family. IF-2 subfamily.

Its subcellular location is the cytoplasm. Functionally, one of the essential components for the initiation of protein synthesis. Protects formylmethionyl-tRNA from spontaneous hydrolysis and promotes its binding to the 30S ribosomal subunits. Also involved in the hydrolysis of GTP during the formation of the 70S ribosomal complex. The polypeptide is Translation initiation factor IF-2 (Xanthomonas oryzae pv. oryzae (strain PXO99A)).